Here is a 1226-residue protein sequence, read N- to C-terminus: Methionine synthase (1226 aa).

Residues 6-326 (RAQIEAQLKQ…EHIRHMAMAV (321 aa)) form the Hcy-binding domain. Zn(2+)-binding residues include C248, C311, and C312. The 262-residue stretch at 357–618 (FVNVGERTNV…VPEKLREAVE (262 aa)) folds into the Pterin-binding domain. The B12-binding N-terminal domain occupies 651–745 (SALEWRTWSV…FINASKQVGS (95 aa)). Methylcob(III)alamin-binding positions include E695, 757 to 761 (GDVHD), H760, S805, T809, and A861. Positions 747 to 882 (NGKILLATVK…SDELRPAFVE (136 aa)) constitute a B12-binding domain. One can recognise an AdoMet activation domain in the interval 898–1226 (KKPRTKPVTL…EKWLGPNING (329 aa)). Residues D948, R1136, and 1191–1192 (YF) each bind S-adenosyl-L-methionine.

Belongs to the vitamin-B12 dependent methionine synthase family. Requires methylcob(III)alamin as cofactor. Zn(2+) serves as cofactor.

The catalysed reaction is (6S)-5-methyl-5,6,7,8-tetrahydrofolate + L-homocysteine = (6S)-5,6,7,8-tetrahydrofolate + L-methionine. It functions in the pathway amino-acid biosynthesis; L-methionine biosynthesis via de novo pathway; L-methionine from L-homocysteine (MetH route): step 1/1. Catalyzes the transfer of a methyl group from methyl-cobalamin to homocysteine, yielding enzyme-bound cob(I)alamin and methionine. Subsequently, remethylates the cofactor using methyltetrahydrofolate. The chain is Methionine synthase (metH) from Vibrio vulnificus (strain YJ016).